The chain runs to 139 residues: MKPAARRRARECAVQALYSWQISKNDIADVEYQFLAEQDVKDVDITYFRELVGGVATNSAYLDGLMKPYLSRQLEELGQVEKAILRISLFELSKRSDVPYKVAINEGIELAKVFGAEDSHKFVNGVLDKAAPQIRPNRK.

It belongs to the NusB family.

In terms of biological role, involved in transcription antitermination. Required for transcription of ribosomal RNA (rRNA) genes. Binds specifically to the boxA antiterminator sequence of the ribosomal RNA (rrn) operons. In Erwinia tasmaniensis (strain DSM 17950 / CFBP 7177 / CIP 109463 / NCPPB 4357 / Et1/99), this protein is Transcription antitermination protein NusB.